The sequence spans 261 residues: Carnitinyl-CoA dehydratase (261 aa).

Catalysis depends on Glu111, which acts as the Nucleophile. The Proton acceptor role is filled by Glu131.

This sequence belongs to the enoyl-CoA hydratase/isomerase family.

The catalysed reaction is (R)-carnitinyl-CoA = crotonobetainyl-CoA + H2O. The protein operates within amine and polyamine metabolism; carnitine metabolism. Functionally, catalyzes the reversible dehydration of L-carnitinyl-CoA to crotonobetainyl-CoA. This is Carnitinyl-CoA dehydratase from Salmonella enteritidis PT4 (strain P125109).